We begin with the raw amino-acid sequence, 201 residues long: Protein Thf1 (201 aa).

Positions Ile-174 to Leu-201 form a coiled coil.

It belongs to the THF1 family.

In terms of biological role, may be involved in photosynthetic membrane biogenesis. The polypeptide is Protein Thf1 (Prochlorococcus marinus (strain MIT 9312)).